The primary structure comprises 62 residues: Short neurotoxin 1 (62 aa).

The interval 1 to 20 is disordered; the sequence is LECHNQQSSEPPTTTRCSGG. Cystine bridges form between C3–C24, C17–C41, C43–C54, and C55–C60.

Belongs to the three-finger toxin family. Short-chain subfamily. Type I alpha-neurotoxin sub-subfamily. Expressed by the venom gland.

Its subcellular location is the secreted. Its function is as follows. Binds to muscle nicotinic acetylcholine receptor (nAChR) and inhibit acetylcholine from binding to the receptor, thereby impairing neuromuscular transmission. This is Short neurotoxin 1 from Naja mossambica (Mozambique spitting cobra).